A 138-amino-acid polypeptide reads, in one-letter code: Transcriptional activator protein (138 aa).

Low complexity predominate over residues M1 to P20. Residues M1 to K23 are disordered. Positions K23–R37 match the Nuclear localization signal motif. A zinc finger lies at C42–H59. The span at N85 to K106 shows a compositional bias: polar residues. The tract at residues N85–P123 is disordered. Residues V113–P123 show a composition bias toward low complexity. The segment at S124–K138 is transactivation.

The protein belongs to the geminiviridae transcriptional activator protein family. Monomer. Homodimer. Homooligomer. Self-interaction correlates with nuclear localization and efficient activation of transcription. Monomers suppress local silencing by interacting with and inactivating host adenosine kinase 2 (ADK2) in the cytoplasm. Interacts with and inhibits host SNF1 kinase. Binds to ssDNA. In terms of processing, phosphorylated.

The protein localises to the host nucleus. The protein resides in the host cytoplasm. Functionally, strong activator of the late viral genes promoters. Enhances the expression of the capsid protein and nuclear shuttle protein. Acts as a suppressor of RNA-mediated gene silencing, also known as post-transcriptional gene silencing (PTGS), a mechanism of plant viral defense that limits the accumulation of viral RNAs. Suppresses the host RNA silencing by inhibiting adenosine kinase 2 (ADK2), a kinase involved in a general methylation pathway. Also suppresses the host basal defense by interacting with and inhibiting SNF1 kinase, a key regulator of cell metabolism implicated in innate antiviral defense. Determines pathogenicity. The protein is Transcriptional activator protein of Pepper huasteco yellow vein virus (PHYVV).